The sequence spans 356 residues: Histidinol-phosphate aminotransferase 1 (356 aa).

An N6-(pyridoxal phosphate)lysine modification is found at K213.

This sequence belongs to the class-II pyridoxal-phosphate-dependent aminotransferase family. Histidinol-phosphate aminotransferase subfamily. In terms of assembly, homodimer. Pyridoxal 5'-phosphate is required as a cofactor.

The enzyme catalyses L-histidinol phosphate + 2-oxoglutarate = 3-(imidazol-4-yl)-2-oxopropyl phosphate + L-glutamate. It participates in amino-acid biosynthesis; L-histidine biosynthesis; L-histidine from 5-phospho-alpha-D-ribose 1-diphosphate: step 7/9. The chain is Histidinol-phosphate aminotransferase 1 (hisC1) from Bordetella parapertussis (strain 12822 / ATCC BAA-587 / NCTC 13253).